A 199-amino-acid polypeptide reads, in one-letter code: Glycerol-3-phosphate acyltransferase (199 aa).

A run of 5 helical transmembrane segments spans residues 4–24 (FALF…AILI), 56–76 (LAVL…GYYL), 80–100 (QFEL…PIFF), 115–135 (IAPI…FVFL), and 154–176 (YVWW…LIYR).

The protein belongs to the PlsY family. As to quaternary structure, probably interacts with PlsX.

It is found in the cell inner membrane. It carries out the reaction an acyl phosphate + sn-glycerol 3-phosphate = a 1-acyl-sn-glycero-3-phosphate + phosphate. The protein operates within lipid metabolism; phospholipid metabolism. Its function is as follows. Catalyzes the transfer of an acyl group from acyl-phosphate (acyl-PO(4)) to glycerol-3-phosphate (G3P) to form lysophosphatidic acid (LPA). This enzyme utilizes acyl-phosphate as fatty acyl donor, but not acyl-CoA or acyl-ACP. In Haemophilus influenzae (strain PittEE), this protein is Glycerol-3-phosphate acyltransferase.